A 438-amino-acid polypeptide reads, in one-letter code: Xylose isomerase (438 aa).

Residues His100 and Asp103 contribute to the active site. Mg(2+) contacts are provided by Glu231, Glu267, His270, Asp295, Asp306, Asp308, and Asp338.

This sequence belongs to the xylose isomerase family. In terms of assembly, homotetramer. Mg(2+) is required as a cofactor.

It is found in the cytoplasm. It catalyses the reaction alpha-D-xylose = alpha-D-xylulofuranose. This Pseudomonas savastanoi pv. phaseolicola (strain 1448A / Race 6) (Pseudomonas syringae pv. phaseolicola (strain 1448A / Race 6)) protein is Xylose isomerase.